Here is a 434-residue protein sequence, read N- to C-terminus: Histidine--tRNA ligase (434 aa).

This sequence belongs to the class-II aminoacyl-tRNA synthetase family. In terms of assembly, homodimer.

The protein localises to the cytoplasm. It catalyses the reaction tRNA(His) + L-histidine + ATP = L-histidyl-tRNA(His) + AMP + diphosphate + H(+). This chain is Histidine--tRNA ligase, found in Latilactobacillus sakei subsp. sakei (strain 23K) (Lactobacillus sakei subsp. sakei).